We begin with the raw amino-acid sequence, 75 residues long: Putative sulfur carrier protein TsuB (75 aa).

The active-site Cysteine persulfide intermediate is the Cys-13.

Belongs to the sulfur carrier protein TusA family.

In terms of biological role, involved in thiosulfate metabolism. The chain is Putative sulfur carrier protein TsuB from Escherichia coli (strain K12).